The chain runs to 303 residues: Elongation factor Ts (303 aa).

The tract at residues 81–84 is involved in Mg(2+) ion dislocation from EF-Tu; that stretch reads TDFV.

The protein belongs to the EF-Ts family.

The protein resides in the cytoplasm. Its function is as follows. Associates with the EF-Tu.GDP complex and induces the exchange of GDP to GTP. It remains bound to the aminoacyl-tRNA.EF-Tu.GTP complex up to the GTP hydrolysis stage on the ribosome. This Mesomycoplasma hyopneumoniae (strain J / ATCC 25934 / NCTC 10110) (Mycoplasma hyopneumoniae) protein is Elongation factor Ts.